A 535-amino-acid chain; its full sequence is RAN GTPase-activating protein 1 (535 aa).

Residues 1-115 (MDHSAKTTQN…EESEVEVSKD (115 aa)) are WPP. LRR repeat units follow at residues 208 to 231 (GSKL…AFAS), 236 to 259 (QHDL…AVRE), 264 to 287 (TDKI…AIAE), 320 to 343 (CSHL…ALAK), 353 to 376 (EIYM…LLKS), 377 to 400 (APSL…NLAA), 405 to 428 (KQSL…LIAK), 433 to 456 (HDQL…ALAQ), and 461 to 488 (KNTF…MFKD). The tract at residues 493–535 (LVPLDDNDPEGEDFEDEDEEEEGEDGNELESKLGSLKIKQGEE) is disordered. Residues 497-520 (DDNDPEGEDFEDEDEEEEGEDGNE) show a composition bias toward acidic residues.

It belongs to the RNA1 family. Homodimer. Interacts with WIP1 through its WPP domain. Component of Ran complexes at least composed of WIT1 or WIT2, RANGAP1 or RANGAP2, and WIP1 or WIP2 or WIP3. Interacts directly with WIT1, WIP2 and WIP3. Interacts with POK1.

Its subcellular location is the cytoplasm. It is found in the nucleus envelope. The protein localises to the nucleus membrane. The protein resides in the cytoskeleton. It localises to the spindle. Its subcellular location is the phragmoplast. Functionally, GTPase activator for the nuclear Ras-related regulatory protein Ran, converting it to the putatively inactive GDP-bound state. Plays a role in spatial signaling during cell division. The sequence is that of RAN GTPase-activating protein 1 (RANGAP1) from Arabidopsis thaliana (Mouse-ear cress).